The sequence spans 617 residues: DNA mismatch repair protein MutL (617 aa).

The disordered stretch occupies residues 363–394; it reads YAPAYGARPPQPSAWSVDTSPHRPLDDGQNRF. Residues 382–392 are compositionally biased toward basic and acidic residues; the sequence is SPHRPLDDGQN.

The protein belongs to the DNA mismatch repair MutL/HexB family.

Its function is as follows. This protein is involved in the repair of mismatches in DNA. It is required for dam-dependent methyl-directed DNA mismatch repair. May act as a 'molecular matchmaker', a protein that promotes the formation of a stable complex between two or more DNA-binding proteins in an ATP-dependent manner without itself being part of a final effector complex. This Allorhizobium ampelinum (strain ATCC BAA-846 / DSM 112012 / S4) (Agrobacterium vitis (strain S4)) protein is DNA mismatch repair protein MutL.